Here is a 212-residue protein sequence, read N- to C-terminus: Ropporin-1 (212 aa).

One can recognise an RIIa domain in the interval 12 to 43 (PELPELLKQFTKAAIRTQPPDLIQWAAEYFGA). Ser-56 bears the Phosphoserine mark. The segment at 209-212 (VRLE) is interaction with RHPN1.

Belongs to the ropporin family. In terms of assembly, homodimer. Interacts with AKAP3. May interact with SPA17. Interacts with RHPN1. Interacts with FSCB; the interaction increases upon spermatozoa capacitation conditions. Interacts with CFAP61. Sumoylated, sumoylation decreases upon spermatozoa capacitation conditions.

The protein localises to the cell projection. It is found in the cilium. Its subcellular location is the flagellum. Functionally, important for male fertility. With ROPN1L, involved in fibrous sheath integrity and sperm motility, plays a role in PKA-dependent signaling processes required for spermatozoa capacitation. This Rattus norvegicus (Rat) protein is Ropporin-1 (Ropn1).